The primary structure comprises 182 residues: Protein GrpE (182 aa).

Belongs to the GrpE family. In terms of assembly, homodimer.

The protein localises to the cytoplasm. Its function is as follows. Participates actively in the response to hyperosmotic and heat shock by preventing the aggregation of stress-denatured proteins, in association with DnaK and GrpE. It is the nucleotide exchange factor for DnaK and may function as a thermosensor. Unfolded proteins bind initially to DnaJ; upon interaction with the DnaJ-bound protein, DnaK hydrolyzes its bound ATP, resulting in the formation of a stable complex. GrpE releases ADP from DnaK; ATP binding to DnaK triggers the release of the substrate protein, thus completing the reaction cycle. Several rounds of ATP-dependent interactions between DnaJ, DnaK and GrpE are required for fully efficient folding. The chain is Protein GrpE from Aquifex aeolicus (strain VF5).